The chain runs to 180 residues: SAGA-associated factor 11 homolog (180 aa).

An SGF11-type zinc finger spans residues 98–119 (CSCPNCNRIVAASRFAPHLEKC). Positions 138-180 (RDGGNYFGADEDDEDDADWSGEKRKKKIAPVRTNGSKKNGKTS) are disordered. A compositionally biased stretch (acidic residues) spans 146-156 (ADEDDEDDADW).

This sequence belongs to the SGF11 family. In terms of assembly, component of some SAGA transcription coactivator-HAT complexes. Within the SAGA complex, participates in a subcomplex of SAGA called the DUB module (deubiquitination module).

Its subcellular location is the nucleus. In terms of biological role, component of the transcription regulatory histone acetylation (HAT) complex SAGA, a multiprotein complex that activates transcription by remodeling chromatin and mediating histone acetylation and deubiquitination. Within the SAGA complex, participates in a subcomplex that specifically deubiquitinates histone H2B. The SAGA complex is recruited to specific gene promoters by activators, where it is required for transcription. The polypeptide is SAGA-associated factor 11 homolog (Aedes aegypti (Yellowfever mosquito)).